A 1015-amino-acid chain; its full sequence is SKI family transcriptional corepressor 2 (1015 aa).

2 disordered regions span residues 280-316 and 518-934; these read HLLG…DDDD and GAAG…KKDV. Positions 284 to 295 are enriched in pro residues; that stretch reads APPPPPPPPPPL. Residues 575–600 are compositionally biased toward low complexity; sequence PPADSVAAAGAGAAAAGSGPAGSRVP. The span at 628–637 shows a compositional bias: basic and acidic residues; it reads GGKDDAESLA. Residues 653–669 show a composition bias toward basic residues; that stretch reads HPHHHHHPHHHHHHHHP. Composition is skewed to pro residues over residues 670–684 and 694–708; these read PQPP…PQPD and APPP…PPLA. Acidic residues-rich tracts occupy residues 730–745 and 754–774; these read DSSE…QEVD and GEEE…EETE. Over residues 793–803 the composition is skewed to basic and acidic residues; it reads PSEKGSSRDRA. The span at 832-842 shows a compositional bias: pro residues; the sequence is DLPPPPPPPLA. 3 stretches are compositionally biased toward basic and acidic residues: residues 861–877, 885–899, and 912–922; these read PSLE…KTKE, TKDD…KEHS, and FWRERSGEHTQ.

The protein belongs to the SKI family. Interacts with SMAD2 and SMAD3. In terms of tissue distribution, expressed in cerebellum, spinal cord and testis. Isoform 2 is present in cerebellum (at protein level).

The protein localises to the nucleus. Its subcellular location is the cytoplasm. Exhibits transcriptional repressor activity. Acts as a TGF-beta antagonist in the nervous system. The protein is SKI family transcriptional corepressor 2 of Homo sapiens (Human).